The primary structure comprises 217 residues: U2 snRNP component ist3 (217 aa).

Residues 31-109 (AYIYIGNLDF…RLVRVDHVAS (79 aa)) form the RRM domain. Disordered stretches follow at residues 119-138 (PANL…STIN) and 154-217 (EVEQ…DLDG). Positions 128–138 (SGSSLSVSTIN) are enriched in polar residues. Serine 160 bears the Phosphoserine mark. Basic and acidic residues-rich tracts occupy residues 161 to 176 (PKDE…DYIH) and 185 to 198 (HESS…DSNR). Residues 199–217 (HSRHHRRHSRSRRHRDLDG) are compositionally biased toward basic residues.

It belongs to the IST3 family. In terms of assembly, belongs to the 40S cdc5-associated complex (or cwf complex), a spliceosome sub-complex reminiscent of a late-stage spliceosome composed of the U2, U5 and U6 snRNAs and at least brr2, cdc5, cwf2/prp3, cwf3/syf1, cwf4/syf3, cwf5/ecm2, spp42/cwf6, cwf7/spf27, cwf8, cwf9, cwf10, cwf11, cwf12, prp45/cwf13, cwf14, cwf15, cwf16, cwf17, cwf18, cwf19, cwf20, cwf21, cwf22, cwf23, cwf24, cwf25, cwf26, cyp7/cwf27, cwf28, cwf29/ist3, lea1, msl1, prp5/cwf1, prp10, prp12/sap130, prp17, prp22, sap61, sap62, sap114, sap145, slu7, smb1, smd1, smd3, smf1, smg1 and syf2.

It localises to the nucleus. Required for pre-mRNA splicing and spliceosome assembly. This is U2 snRNP component ist3 (cwf29) from Schizosaccharomyces pombe (strain 972 / ATCC 24843) (Fission yeast).